The sequence spans 3075 residues: Probable polyketide synthase 30 (3075 aa).

The Ketosynthase family 3 (KS3) domain occupies 26-458 (SGDVAVIGIG…GSNVCLILSE (433 aa)). Active-site for beta-ketoacyl synthase activity residues include C198, H337, and H381. An acyl/malonyl transferase region spans residues 663 to 696 (GVSADIIIGHSLGEVSSPYCSGMIDFQTLCYLTY). S673 serves as the catalytic For acyl/malonyl transferase activity. The N-terminal hotdog fold stretch occupies residues 963–1085 (GPSINNLGNN…GNFSLTKHNS (123 aa)). Residues 963–1269 (GPSINNLGNN…CALVSLGSNP (307 aa)) form the PKS/mFAS DH domain. H997 functions as the Proton acceptor; for dehydratase activity in the catalytic mechanism. The tract at residues 1102 to 1269 (NFTSMSKQDF…CALVSLGSNP (168 aa)) is C-terminal hotdog fold. The active-site Proton donor; for dehydratase activity is the D1174. A Carrier domain is found at 2533–2610 (DNNEIIRSTI…QSIEIIKSAH (78 aa)). S2570 bears the O-(pantetheine 4'-phosphoryl)serine mark.

The cofactor is pantetheine 4'-phosphate.

In terms of biological role, probable polyketide synthase. May be involved in the process of cell migration. The polypeptide is Probable polyketide synthase 30 (pks30) (Dictyostelium discoideum (Social amoeba)).